We begin with the raw amino-acid sequence, 87 residues long: Translation initiation factor IF-1 (87 aa).

In terms of domain architecture, S1-like spans 16-87; sequence LSKEDVIEME…TKGRISYRHK (72 aa).

Belongs to the IF-1 family. As to quaternary structure, component of the 30S ribosomal translation pre-initiation complex which assembles on the 30S ribosome in the order IF-2 and IF-3, IF-1 and N-formylmethionyl-tRNA(fMet); mRNA recruitment can occur at any time during PIC assembly.

The protein resides in the cytoplasm. In terms of biological role, one of the essential components for the initiation of protein synthesis. Stabilizes the binding of IF-2 and IF-3 on the 30S subunit to which N-formylmethionyl-tRNA(fMet) subsequently binds. Helps modulate mRNA selection, yielding the 30S pre-initiation complex (PIC). Upon addition of the 50S ribosomal subunit IF-1, IF-2 and IF-3 are released leaving the mature 70S translation initiation complex. The protein is Translation initiation factor IF-1 of Magnetococcus marinus (strain ATCC BAA-1437 / JCM 17883 / MC-1).